The chain runs to 114 residues: Ig heavy chain V region (114 aa).

An Ig-like domain is found at 1–106 (EVQLQQSGAE…AVRVISRYFD (106 aa)).

The sequence is that of Ig heavy chain V region from Mus musculus (Mouse).